A 531-amino-acid polypeptide reads, in one-letter code: Bifunctional protein TrpGD (531 aa).

Residues 3 to 196 (DILLLDNIDS…LAWAQQKLEP (194 aa)) form the Glutamine amidotransferase type-1 domain. Position 57 to 59 (57 to 59 (GPG)) interacts with L-glutamine. Cysteine 84 (nucleophile; for GATase activity) is an active-site residue. L-glutamine is bound by residues glutamine 88 and 134 to 135 (SL). Catalysis depends on for GATase activity residues histidine 170 and glutamate 172. Residues 202 to 531 (PILEKLYQAQ…DRVTALAARG (330 aa)) form an anthranilate phosphoribosyltransferase region.

The protein in the C-terminal section; belongs to the anthranilate phosphoribosyltransferase family. As to quaternary structure, heterotetramer consisting of two non-identical subunits: a beta subunit (TrpG) and a large alpha subunit (TrpE).

It carries out the reaction chorismate + L-glutamine = anthranilate + pyruvate + L-glutamate + H(+). It catalyses the reaction N-(5-phospho-beta-D-ribosyl)anthranilate + diphosphate = 5-phospho-alpha-D-ribose 1-diphosphate + anthranilate. It functions in the pathway amino-acid biosynthesis; L-tryptophan biosynthesis; L-tryptophan from chorismate: step 1/5. Its pathway is amino-acid biosynthesis; L-tryptophan biosynthesis; L-tryptophan from chorismate: step 2/5. Cooperatively feedback inhibited by tryptophan. Part of a heterotetrameric complex that catalyzes the two-step biosynthesis of anthranilate, an intermediate in the biosynthesis of L-tryptophan. In the first step, the glutamine-binding beta subunit (TrpG) of anthranilate synthase (AS) provides the glutamine amidotransferase activity which generates ammonia as a substrate that, along with chorismate, is used in the second step, catalyzed by the large alpha subunit of AS (TrpE) to produce anthranilate. In the absence of TrpG, TrpE can synthesize anthranilate directly from chorismate and high concentrations of ammonia. In addition to synthesizing anthranilate, it also catalyzes the second step of the pathway, the transfer of the phosphoribosyl group of 5-phosphorylribose-1-pyrophosphate (PRPP) to anthranilate. In Escherichia coli (strain K12), this protein is Bifunctional protein TrpGD (trpGD).